The chain runs to 379 residues: Queuine tRNA-ribosyltransferase (379 aa).

D94 (proton acceptor) is an active-site residue. Residues 94–98, D148, Q191, and G218 contribute to the substrate site; that span reads DSGGF. The interval 249–255 is RNA binding; the sequence is GVGSPDS. D268 serves as the catalytic Nucleophile. The RNA binding; important for wobble base 34 recognition stretch occupies residues 273-277; sequence TRIAR. Residues C306, C308, C311, and H337 each coordinate Zn(2+).

The protein belongs to the queuine tRNA-ribosyltransferase family. Homodimer. Within each dimer, one monomer is responsible for RNA recognition and catalysis, while the other monomer binds to the replacement base PreQ1. Zn(2+) serves as cofactor.

The catalysed reaction is 7-aminomethyl-7-carbaguanine + guanosine(34) in tRNA = 7-aminomethyl-7-carbaguanosine(34) in tRNA + guanine. The protein operates within tRNA modification; tRNA-queuosine biosynthesis. Functionally, catalyzes the base-exchange of a guanine (G) residue with the queuine precursor 7-aminomethyl-7-deazaguanine (PreQ1) at position 34 (anticodon wobble position) in tRNAs with GU(N) anticodons (tRNA-Asp, -Asn, -His and -Tyr). Catalysis occurs through a double-displacement mechanism. The nucleophile active site attacks the C1' of nucleotide 34 to detach the guanine base from the RNA, forming a covalent enzyme-RNA intermediate. The proton acceptor active site deprotonates the incoming PreQ1, allowing a nucleophilic attack on the C1' of the ribose to form the product. After dissociation, two additional enzymatic reactions on the tRNA convert PreQ1 to queuine (Q), resulting in the hypermodified nucleoside queuosine (7-(((4,5-cis-dihydroxy-2-cyclopenten-1-yl)amino)methyl)-7-deazaguanosine). The polypeptide is Queuine tRNA-ribosyltransferase (Bacillus mycoides (strain KBAB4) (Bacillus weihenstephanensis)).